The following is a 432-amino-acid chain: Transcriptional adapter 3 (432 aa).

Residue K21 forms a Glycyl lysine isopeptide (Lys-Gly) (interchain with G-Cter in SUMO2) linkage. Residues 40-69 (IEELDTLQLELETLLSSASRRLRVLEAETQ) are a coiled coil. The segment at 87–127 (GRDHELGAPPKHGKPKKQKLEGKTGHGPGPGPGRPKSKNVQ) is disordered. K129 is covalently cross-linked (Glycyl lysine isopeptide (Lys-Gly) (interchain with G-Cter in SUMO2)). Residues 272-319 (NIISPMEDSPIPDMSGKESGADGASTSPRNQNKPFSVPHTKSLESRIK) are disordered. Phosphoserine occurs at positions 280 and 298. The span at 295–305 (ASTSPRNQNKP) shows a compositional bias: polar residues. Residues 367–407 (LLRLAKEEVSRQELRQRVRMADNEVMDAFRKIMAARQKKRT) adopt a coiled-coil conformation. K418 is modified (N6-acetyllysine).

It belongs to the NGG1 family. The PCAF complex is composed of a number of TBP-associated factors (TAFS), such as TAF5, TAF5L, TAF6, TAF6L, TAF9, TAF10 and TAF12, PCAF, and also PCAF-associated factors (PAFs), such as TADA2L/ADA2, TADA3L/ADA3 and SPT3. Interacts directly with TADA2L and PCAF and also with the high-risk HPV oncoprotein E6. Component of the STAGA transcription coactivator-HAT complex, at least composed of SUPT3H, GCN5L2, TAF5L, TAF6L, SUPT7L, TADA3L, TAD1L, TAF10, TAF12, TRRAP and TAF9. Component of the TFTC-HAT complex. Component of the ADA2A-containing complex (ATAC), composed of KAT14, KAT2A, TADA2L, TADA3L, ZZ3, MBIP, WDR5, YEATS2, CCDC101 and DR1.

It is found in the nucleus. Its function is as follows. Functions as a component of the PCAF complex. The PCAF complex is capable of efficiently acetylating histones in a nucleosomal context. The PCAF complex could be considered as the human version of the yeast SAGA complex. Also known as a coactivator for p53/TP53-dependent transcriptional activation. Component of the ATAC complex, a complex with histone acetyltransferase activity on histones H3 and H4. This is Transcriptional adapter 3 (Tada3) from Mus musculus (Mouse).